We begin with the raw amino-acid sequence, 121 residues long: Large ribosomal subunit protein eL8 (121 aa).

Belongs to the eukaryotic ribosomal protein eL8 family. Part of the 50S ribosomal subunit. Probably part of the RNase P complex.

The protein resides in the cytoplasm. Multifunctional RNA-binding protein that recognizes the K-turn motif in ribosomal RNA, the RNA component of RNase P, box H/ACA, box C/D and box C'/D' sRNAs. The sequence is that of Large ribosomal subunit protein eL8 from Thermoplasma volcanium (strain ATCC 51530 / DSM 4299 / JCM 9571 / NBRC 15438 / GSS1).